The following is a 104-amino-acid chain: Large ribosomal subunit protein uL24 (104 aa).

It belongs to the universal ribosomal protein uL24 family. As to quaternary structure, part of the 50S ribosomal subunit.

In terms of biological role, one of two assembly initiator proteins, it binds directly to the 5'-end of the 23S rRNA, where it nucleates assembly of the 50S subunit. One of the proteins that surrounds the polypeptide exit tunnel on the outside of the subunit. This chain is Large ribosomal subunit protein uL24, found in Rhodopseudomonas palustris (strain BisB5).